Here is a 350-residue protein sequence, read N- to C-terminus: DNA polymerase IV (350 aa).

Residues Ile-6–Gly-187 enclose the UmuC domain. 2 residues coordinate Mg(2+): Asp-10 and Asp-105. Glu-106 is an active-site residue.

The protein belongs to the DNA polymerase type-Y family. Monomer. Mg(2+) serves as cofactor.

It is found in the cytoplasm. It catalyses the reaction DNA(n) + a 2'-deoxyribonucleoside 5'-triphosphate = DNA(n+1) + diphosphate. Functionally, poorly processive, error-prone DNA polymerase involved in untargeted mutagenesis. Copies undamaged DNA at stalled replication forks, which arise in vivo from mismatched or misaligned primer ends. These misaligned primers can be extended by PolIV. Exhibits no 3'-5' exonuclease (proofreading) activity. May be involved in translesional synthesis, in conjunction with the beta clamp from PolIII. In Protochlamydia amoebophila (strain UWE25), this protein is DNA polymerase IV.